Here is a 533-residue protein sequence, read N- to C-terminus: 2-isopropylmalate synthase (533 aa).

The region spanning 8 to 270 (VIIFDTTLRD…YFNPFLGRPA (263 aa)) is the Pyruvate carboxyltransferase domain. 4 residues coordinate Mn(2+): Asp17, His209, His211, and Asn245. The regulatory domain stretch occupies residues 409-533 (RLELVQVSCG…KEKTPEMLQV (125 aa)).

The protein belongs to the alpha-IPM synthase/homocitrate synthase family. LeuA type 1 subfamily. In terms of assembly, homodimer. It depends on Mn(2+) as a cofactor.

It localises to the cytoplasm. The enzyme catalyses 3-methyl-2-oxobutanoate + acetyl-CoA + H2O = (2S)-2-isopropylmalate + CoA + H(+). It participates in amino-acid biosynthesis; L-leucine biosynthesis; L-leucine from 3-methyl-2-oxobutanoate: step 1/4. Catalyzes the condensation of the acetyl group of acetyl-CoA with 3-methyl-2-oxobutanoate (2-ketoisovalerate) to form 3-carboxy-3-hydroxy-4-methylpentanoate (2-isopropylmalate). This is 2-isopropylmalate synthase from Microcystis aeruginosa.